We begin with the raw amino-acid sequence, 300 residues long: MATLISERQHPQAIWRDYLELTKPKVVVLMLITSLVGMFLATRAGVPWTVLVFGNLGIALCAGGAAAVNHVVDRRIDALMARTHKRPLAEGRVSPRAALAFALLLALAGQALLLTFTNPLTAWLTLASLLGYAVVYTGFLKRATPQNIVIGGLAGAAPPLLGWVAATGHMSAEPLLLVLIIFAWTPPHFWALAIHRKEEYAKADIPMLPVTHGEHYTKVHILLYTFALLAVSLLPYVIHMSGVLYLVCALALGGRFLQWAWVLYRGTRPHAAINTFKYSIYYLFLLFIALLVDHYLLLNL.

8 consecutive transmembrane segments (helical) span residues 26–46, 48–68, 97–117, 120–140, 148–168, 174–194, 226–246, and 280–300; these read VVVLMLITSLVGMFLATRAGV, WTVLVFGNLGIALCAGGAAAV, AALAFALLLALAGQALLLTFT, LTAWLTLASLLGYAVVYTGFL, IVIGGLAGAAPPLLGWVAATG, PLLLVLIIFAWTPPHFWALAI, FALLAVSLLPYVIHMSGVLYL, and IYYLFLLFIALLVDHYLLLNL.

This sequence belongs to the UbiA prenyltransferase family. Protoheme IX farnesyltransferase subfamily.

The protein localises to the cell inner membrane. The catalysed reaction is heme b + (2E,6E)-farnesyl diphosphate + H2O = Fe(II)-heme o + diphosphate. It functions in the pathway porphyrin-containing compound metabolism; heme O biosynthesis; heme O from protoheme: step 1/1. Its function is as follows. Converts heme B (protoheme IX) to heme O by substitution of the vinyl group on carbon 2 of heme B porphyrin ring with a hydroxyethyl farnesyl side group. The polypeptide is Protoheme IX farnesyltransferase 1 (Pseudomonas fluorescens (strain ATCC BAA-477 / NRRL B-23932 / Pf-5)).